The following is a 533-amino-acid chain: Berberine bridge enzyme-like 28 (533 aa).

The signal sequence occupies residues 1 to 23; that stretch reads MEFSSFLFTILLFSLNISPLVSA. A disulfide bridge connects residues cysteine 34 and cysteine 96. The region spanning 74-249 is the FAD-binding PCMH-type domain; sequence ETPKPVSIIT…LSWKVKLVDV (176 aa). Histidine 111 bears the Pros-8alpha-FAD histidine mark. N-linked (GlcNAc...) asparagine glycans are attached at residues asparagine 142 and asparagine 440.

The protein belongs to the oxygen-dependent FAD-linked oxidoreductase family. FAD is required as a cofactor.

It localises to the secreted. Its subcellular location is the cell wall. Involved in adaptation to salt stress. This Arabidopsis thaliana (Mouse-ear cress) protein is Berberine bridge enzyme-like 28.